Reading from the N-terminus, the 311-residue chain is Pyrimidine-specific ribonucleoside hydrolase RihA (311 aa).

His240 is a catalytic residue.

Belongs to the IUNH family. RihA subfamily.

Its function is as follows. Hydrolyzes with equal efficiency cytidine or uridine to ribose and cytosine or uracil, respectively. The protein is Pyrimidine-specific ribonucleoside hydrolase RihA of Escherichia coli O9:H4 (strain HS).